A 146-amino-acid polypeptide reads, in one-letter code: MKLHELKPAQGSRKTRNRVGRGSSSGNGKTAGRGQKGQKARSGGNIRSGFEGGQTPLFRRLPKRGFTNINAKEYALVNLDQLNVFEDGAEVTPVVLVETGIVKAEKSGIKILGNGELTKKLTVKAAKFSKSAEAAIIAKGGSIEVI.

Positions 1–57 (MKLHELKPAQGSRKTRNRVGRGSSSGNGKTAGRGQKGQKARSGGNIRSGFEGGQTPL) are disordered. Residues 23 to 35 (SSSGNGKTAGRGQ) are compositionally biased toward gly residues.

This sequence belongs to the universal ribosomal protein uL15 family. Part of the 50S ribosomal subunit.

Binds to the 23S rRNA. The sequence is that of Large ribosomal subunit protein uL15 from Streptococcus mutans serotype c (strain ATCC 700610 / UA159).